The sequence spans 136 residues: Holo-[acyl-carrier-protein] synthase (136 aa).

Residues Asp8 and Glu62 each coordinate Mg(2+).

It belongs to the P-Pant transferase superfamily. AcpS family. Requires Mg(2+) as cofactor.

It is found in the cytoplasm. It catalyses the reaction apo-[ACP] + CoA = holo-[ACP] + adenosine 3',5'-bisphosphate + H(+). In terms of biological role, transfers the 4'-phosphopantetheine moiety from coenzyme A to a Ser of acyl-carrier-protein. The protein is Holo-[acyl-carrier-protein] synthase of Polynucleobacter necessarius subsp. necessarius (strain STIR1).